Consider the following 777-residue polypeptide: ATPase ARSA1 (777 aa).

110-117 (KGGVGKTS) serves as a coordination point for ATP. Residue Asp139 is part of the active site. ATP contacts are provided by residues Asn372 and 454–461 (KGGVGKTS). Asp483 is a catalytic residue. Asn712 provides a ligand contact to ATP.

This sequence belongs to the arsA ATPase family. In terms of assembly, monomer. Interacts with TOC34.

It localises to the cytoplasm. Its subcellular location is the cytosol. In terms of biological role, ATPase required for the post-translational delivery of tail-anchored (TA) proteins to the chloroplast. Required for the accumulation of TOC34, an essential component of the outer chloroplast membrane translocon (TOC) complex. Recognizes and selectively binds the transmembrane domain of TA proteins in the cytosol. This complex then targets to chloroplast, where the tail-anchored protein is released for insertion. This process is regulated by ATP binding and hydrolysis. This is ATPase ARSA1 from Chlamydomonas reinhardtii (Chlamydomonas smithii).